Reading from the N-terminus, the 526-residue chain is Acetyl-CoA hydrolase (526 aa).

277 to 281 (GIGNI) contributes to the CoA binding site. Glutamate 302 serves as the catalytic 5-glutamyl coenzyme A thioester intermediate. CoA contacts are provided by asparagine 392 and glycine 396.

This sequence belongs to the acetyl-CoA hydrolase/transferase family.

The protein localises to the cytoplasm. The catalysed reaction is acetyl-CoA + H2O = acetate + CoA + H(+). Presumably involved in regulating the intracellular acetyl-CoA pool for fatty acid and cholesterol synthesis and fatty acid oxidation. In Candida glabrata (strain ATCC 2001 / BCRC 20586 / JCM 3761 / NBRC 0622 / NRRL Y-65 / CBS 138) (Yeast), this protein is Acetyl-CoA hydrolase (ACH1).